Reading from the N-terminus, the 368-residue chain is 3-isopropylmalate dehydrogenase (368 aa).

Residue 77-88 (GPKWGTGAVRPE) participates in NAD(+) binding. Positions 95, 105, 134, and 226 each coordinate substrate. Residues Asp226, Asp251, and Asp255 each coordinate Mg(2+). 290–301 (GSAPDLPANKVN) provides a ligand contact to NAD(+).

The protein belongs to the isocitrate and isopropylmalate dehydrogenases family. In terms of assembly, homodimer. Mg(2+) is required as a cofactor. Mn(2+) serves as cofactor.

The protein localises to the cytoplasm. It carries out the reaction (2R,3S)-3-isopropylmalate + NAD(+) = 4-methyl-2-oxopentanoate + CO2 + NADH. It participates in amino-acid biosynthesis; L-leucine biosynthesis; L-leucine from 3-methyl-2-oxobutanoate: step 3/4. Functionally, catalyzes the oxidation of 3-carboxy-2-hydroxy-4-methylpentanoate (3-isopropylmalate) to 3-carboxy-4-methyl-2-oxopentanoate. The product decarboxylates to 4-methyl-2 oxopentanoate. The polypeptide is 3-isopropylmalate dehydrogenase (LEU2) (Kodamaea ohmeri (Yeast)).